A 414-amino-acid polypeptide reads, in one-letter code: Methyltransferase-like protein 2 (414 aa).

The tract at residues L56 to F77 is disordered.

Belongs to the MT-A70-like family.

Probable methyltransferase. The polypeptide is Methyltransferase-like protein 2 (Arabidopsis thaliana (Mouse-ear cress)).